Here is a 97-residue protein sequence, read N- to C-terminus: Large ribosomal subunit protein bL27 (97 aa).

Positions M1 to F12 are excised as a propeptide. The segment at H14–A37 is disordered.

The protein belongs to the bacterial ribosomal protein bL27 family. The N-terminus is cleaved by ribosomal processing cysteine protease Prp.

The protein is Large ribosomal subunit protein bL27 of Streptococcus agalactiae serotype III (strain NEM316).